The chain runs to 264 residues: AA9 family lytic polysaccharide monooxygenase A (264 aa).

An N-terminal signal peptide occupies residues 1–18 (MHFAALAILSSLVASAAA). Histidine 19 lines the Cu(2+) pocket. N-linked (GlcNAc...) asparagine glycans are attached at residues asparagine 51 and asparagine 75. A disulfide bond links cysteine 59 and cysteine 182. Histidine 96 contributes to the Cu(2+) binding site. Asparagine 110 carries an N-linked (GlcNAc...) asparagine glycan. Histidine 162 contributes to the O2 binding site. Tyrosine 179 contacts Cu(2+). Asparagine 218 and asparagine 251 each carry an N-linked (GlcNAc...) asparagine glycan.

Belongs to the polysaccharide monooxygenase AA9 family. The cofactor is Cu(2+).

It is found in the secreted. The catalysed reaction is [(1-&gt;4)-beta-D-glucosyl]n+m + reduced acceptor + O2 = 4-dehydro-beta-D-glucosyl-[(1-&gt;4)-beta-D-glucosyl]n-1 + [(1-&gt;4)-beta-D-glucosyl]m + acceptor + H2O.. Its function is as follows. Lytic polysaccharide monooxygenase (LPMO) that depolymerizes crystalline and amorphous polysaccharides via the oxidation of scissile alpha- or beta-(1-4)-glycosidic bonds, yielding C4 oxidation products. Catalysis by LPMOs requires the reduction of the active-site copper from Cu(II) to Cu(I) by a reducing agent and H(2)O(2) or O(2) as a cosubstrate. Active on cellulose and cello-oligosaccharides, as well as plant cell wall-derived hemicellulosic polysaccharides. Also active on cello-oligosaccharides such as cellohexaose, cellopentaose or cellotetraose. The chain is AA9 family lytic polysaccharide monooxygenase A from Phanerochaete carnosa (strain HHB-10118-sp) (White-rot fungus).